Consider the following 219-residue polypeptide: UPF0126 membrane protein SCO5481 (219 aa).

A run of 6 helical transmembrane segments spans residues 10 to 30 (VQHTLDLVGIFVFAISGALLA), 34 to 54 (NFDVFGIAVLAEVTALGGGLF), 66 to 86 (AFTDLGYFLTPLLATLLVFFL), 93 to 113 (LQTGVNIFDAAGLGLFCVAGT), 120 to 140 (GLGLTASACLGLTTAVGGGVL), and 158 to 178 (LYAVPAIVGSAMVALCIRYEA).

The protein belongs to the UPF0126 family.

The protein localises to the cell membrane. The protein is UPF0126 membrane protein SCO5481 of Streptomyces coelicolor (strain ATCC BAA-471 / A3(2) / M145).